The chain runs to 180 residues: MAKMQGRMQGKVAPGDDRGDGLKEKMVAINRVTKVVKGGRILGFAALTVVGNGDGGVGMGKGKSREVPVAVQKAMDEARRKMIKVSLKNGTLQHPVIGRHGAAKVYMQPASEGTGIIAGGPMRAIFEVMGVHNILAKCIGSTNPYNVVRATLNGLQAMSNPAEIAAKRGKSVEEILGLEK.

The interval 1 to 20 is disordered; it reads MAKMQGRMQGKVAPGDDRGD. The region spanning 22 to 85 is the S5 DRBM domain; that stretch reads LKEKMVAINR…DEARRKMIKV (64 aa).

Belongs to the universal ribosomal protein uS5 family. As to quaternary structure, part of the 30S ribosomal subunit. Contacts proteins S4 and S8.

Functionally, with S4 and S12 plays an important role in translational accuracy. Located at the back of the 30S subunit body where it stabilizes the conformation of the head with respect to the body. This chain is Small ribosomal subunit protein uS5, found in Nitrosospira multiformis (strain ATCC 25196 / NCIMB 11849 / C 71).